Consider the following 180-residue polypeptide: Endoribonuclease YbeY (180 aa).

Residues His118, His122, and His128 each contribute to the Zn(2+) site.

The protein belongs to the endoribonuclease YbeY family. Zn(2+) serves as cofactor.

It is found in the cytoplasm. Functionally, single strand-specific metallo-endoribonuclease involved in late-stage 70S ribosome quality control and in maturation of the 3' terminus of the 16S rRNA. This chain is Endoribonuclease YbeY, found in Rhodococcus jostii (strain RHA1).